The following is a 91-amino-acid chain: Non-specific lipid-transfer protein 1 (91 aa).

4 cysteine pairs are disulfide-bonded: cysteine 4-cysteine 51, cysteine 14-cysteine 28, cysteine 29-cysteine 74, and cysteine 49-cysteine 88.

Detected in seeds (at protein level).

Functionally, plant non-specific lipid-transfer proteins transfer phospholipids as well as galactolipids across membranes. May play a role in wax or cutin deposition in the cell walls of expanding epidermal cells and certain secretory tissues. The sequence is that of Non-specific lipid-transfer protein 1 from Trachyspermum ammi (Ajowan caraway).